The following is a 676-amino-acid chain: Electrogenic aspartate/glutamate antiporter SLC25A13, mitochondrial (676 aa).

Residue A2 is modified to N-acetylalanine. The segment at 2 to 295 (AAAKVALTKR…TLADIERIAP (294 aa)) is regulatory N-terminal domain. Residues 2–332 (AAAKVALTKR…LLQLAESAYR (331 aa)) are Mitochondrial intermembrane-facing. 4 EF-hand domains span residues 51–86 (SQPN…SVLC), 87–122 (APDA…TTIH), 125–157 (IPFN…FLLE), and 158–193 (IQLE…IRPH). The Ca(2+) site is built by D66, T68, D70, L72, and E77. The interval 296–312 (LEEGMLPFNLAEAQRQQ) is linker loop domain. A carrier domain region spans residues 322–613 (FLLQLAESAY…LQRWFYVDFG (292 aa)). 3 Solcar repeats span residues 327–419 (AESA…VRDK), 427–511 (VPLL…VKAS), and 519–607 (VSPG…LQRW). A helical membrane pass occupies residues 333–350 (FGLGSIAGAVGATAVYPI). Topologically, residues 351 to 393 (DLVKTRMQNQRSTGSFVGELMYKNSFDCFKKVLRYEGFFGLYR) are mitochondrial matrix. Residues K354 and K373 each carry the N6-acetyllysine modification. A helical membrane pass occupies residues 394–413 (GLLPQLLGVAPEKAIKLTVN). The Mitochondrial intermembrane segment spans residues 414–436 (DFVRDKFMHKDGSVPLLAEIFAG). A helical membrane pass occupies residues 437–450 (GCAGGSQVIFTNPL). The Mitochondrial matrix segment spans residues 451 to 485 (EIVKIRLQVAGEITTGPRVSALSVVRDLGFFGIYK). The residue at position 454 (K454) is an N6-methyllysine. Position 485 is an N6-acetyllysine; alternate (K485). K485 is modified (N6-succinyllysine; alternate). Residues 486 to 505 (GAKACFLRDIPFSAIYFPCY) form a helical membrane-spanning segment. The Mitochondrial intermembrane portion of the chain corresponds to 506–524 (AHVKASFANEDGQVSPGSL). Residues 525–542 (LLAGAIAGMPAASLVTPA) form a helical membrane-spanning segment. The Mitochondrial matrix segment spans residues 543 to 581 (DVIKTRLQVAARAGQTTYSGVTDCFRKILREEGPKALWK). The residue at position 581 (K581) is an N6-succinyllysine. A helical membrane pass occupies residues 582 to 601 (GAGARVFRSSPQFGVTLLTY). Topologically, residues 602 to 676 (ELLQRWFYVD…STSKVTAVGS (75 aa)) are mitochondrial intermembrane. Residues 614–676 (GVKPVGSELV…STSKVTAVGS (63 aa)) are C-terminal domain. K663 is subject to N6-acetyllysine. S667 is subject to Phosphoserine.

This sequence belongs to the mitochondrial carrier (TC 2.A.29) family. As to quaternary structure, homodimer (via N-terminus).

It localises to the mitochondrion inner membrane. The catalysed reaction is L-aspartate(in) + L-glutamate(out) + H(+)(out) = L-aspartate(out) + L-glutamate(in) + H(+)(in). It carries out the reaction 3-sulfino-L-alanine(out) + L-glutamate(in) + H(+)(in) = 3-sulfino-L-alanine(in) + L-glutamate(out) + H(+)(out). It catalyses the reaction 3-sulfino-L-alanine(out) + L-aspartate(in) = 3-sulfino-L-alanine(in) + L-aspartate(out). Its activity is regulated as follows. L-aspartate and 3-sulfino-L-alanine uptake are both inhibited by glisoxepide. In terms of biological role, mitochondrial electrogenic aspartate/glutamate antiporter that favors efflux of aspartate and entry of glutamate and proton within the mitochondria as part of the malate-aspartate shuttle. Also mediates the uptake of L-cysteinesulfinate (3-sulfino-L-alanine) by mitochondria in exchange of L-glutamate and proton. Can also exchange L-cysteinesulfinate with aspartate in their anionic form without any proton translocation. Lacks transport activity towards gamma-aminobutyric acid (GABA). This is Electrogenic aspartate/glutamate antiporter SLC25A13, mitochondrial from Rattus norvegicus (Rat).